We begin with the raw amino-acid sequence, 395 residues long: Argininosuccinate synthase (395 aa).

Residues 10–18 and Ala37 each bind ATP; that span reads AYSGGLDTS. L-citrulline contacts are provided by Tyr88 and Ser93. Gly118 contacts ATP. Residues Thr120, Asn124, and Asp125 each coordinate L-aspartate. Asn124 contributes to the L-citrulline binding site. L-citrulline is bound by residues Arg128, Ser179, Ser188, Glu264, and Tyr276.

The protein belongs to the argininosuccinate synthase family. Type 1 subfamily. As to quaternary structure, homotetramer.

The protein resides in the cytoplasm. The catalysed reaction is L-citrulline + L-aspartate + ATP = 2-(N(omega)-L-arginino)succinate + AMP + diphosphate + H(+). The protein operates within amino-acid biosynthesis; L-arginine biosynthesis; L-arginine from L-ornithine and carbamoyl phosphate: step 2/3. The protein is Argininosuccinate synthase of Pelagibacter ubique (strain HTCC1062).